The sequence spans 466 residues: Putative multidrug resistance protein MdtD (466 aa).

Helical transmembrane passes span 11–31 (LWIV…VNTA), 48–68 (SVIV…GWLA), 71–91 (IGVK…SLLC), 105–125 (VIQG…VMKI), 137–157 (FVTL…GFLV), 164–184 (WIFL…WFLM), 194–214 (FDIS…LALD), 218–238 (SLGI…IALL), 262–282 (FSIG…LPFM), 292–312 (GFSP…SMGI), 328–347 (VLVA…ALVA), 351–370 (WIWM…AIRF), 402–422 (SLGV…HIAA), and 429–449 (TVFL…ALIF).

Belongs to the major facilitator superfamily. TCR/Tet family.

It is found in the cell inner membrane. The sequence is that of Putative multidrug resistance protein MdtD from Pectobacterium atrosepticum (strain SCRI 1043 / ATCC BAA-672) (Erwinia carotovora subsp. atroseptica).